We begin with the raw amino-acid sequence, 302 residues long: Ectoine dioxygenase (302 aa).

Glutamine 128 contributes to the L-ectoine binding site. Lysine 134 serves as a coordination point for 2-oxoglutarate. 3 residues coordinate Fe cation: histidine 145, aspartate 147, and histidine 246.

Belongs to the PhyH family. EctD subfamily. Homodimer. Requires Fe(2+) as cofactor.

It carries out the reaction L-ectoine + 2-oxoglutarate + O2 = 5-hydroxyectoine + succinate + CO2. Functionally, involved in the biosynthesis of 5-hydroxyectoine, called compatible solute, which helps organisms to survive extreme osmotic stress by acting as a highly soluble organic osmolyte. Catalyzes the 2-oxoglutarate-dependent selective hydroxylation of L-ectoine to yield (4S,5S)-5-hydroxyectoine. The protein is Ectoine dioxygenase of Stutzerimonas stutzeri (strain A1501) (Pseudomonas stutzeri).